Here is a 240-residue protein sequence, read N- to C-terminus: Large ribosomal subunit protein uL2 (240 aa).

Residues 1-12 are compositionally biased toward basic residues; sequence MGRRIQGQRRGR. Disordered stretches follow at residues 1 to 21 and 198 to 240; these read MGRR…RAPS and VDHP…GSNK. Positions 221–231 are enriched in basic and acidic residues; the sequence is PPGRKVGDIAS.

Belongs to the universal ribosomal protein uL2 family. Part of the 50S ribosomal subunit. Forms a bridge to the 30S subunit in the 70S ribosome.

In terms of biological role, one of the primary rRNA binding proteins. Required for association of the 30S and 50S subunits to form the 70S ribosome, for tRNA binding and peptide bond formation. It has been suggested to have peptidyltransferase activity; this is somewhat controversial. Makes several contacts with the 16S rRNA in the 70S ribosome. In Halorubrum lacusprofundi (strain ATCC 49239 / DSM 5036 / JCM 8891 / ACAM 34), this protein is Large ribosomal subunit protein uL2.